The sequence spans 509 residues: Thymus-specific serine protease (509 aa).

Positions 1 to 22 are cleaved as a signal peptide; sequence MAVKAPWLGFLLLVSLWGLSTP. N69 and N171 each carry an N-linked (GlcNAc...) asparagine glycan. The Charge relay system role is filled by S184. N320 is a glycosylation site (N-linked (GlcNAc...) asparagine). Residues D446 and H471 each act as charge relay system in the active site.

This sequence belongs to the peptidase S28 family. In terms of tissue distribution, expressed predominantly in cortical thymic epithelial cells, with highest expression around vessels and the thymic capsule.

It localises to the cytoplasmic vesicle. Its function is as follows. Protease that may play a role in T-cell development. This is Thymus-specific serine protease (Prss16) from Mus musculus (Mouse).